Consider the following 280-residue polypeptide: MHSDASNFQLNSHLSTLASIHKIYHTLHRLNLTEDVGPESHGTACCSRAMPPRKKRRPTAGDDLSAKKSRQDNVYRKQEALQIQEAEAFSSKRCLEWFYEYAGCDDVVGPEGMEKFCEDIGVEPENVVMLVLAWKLDAQSMGYFTLQEWLKGMGSLQCDSTEKLRNSLDYLRSVLNDATSFKLIYRYAFDFAREKDQRSLDLNTAKCMLGLLLGKTWPLFPVFNQFLEQSKYKVINKDQWCNVLEFSRTINLDLSNYDEDGAWPVLLDEFVEWYKDREMS.

Residues Gly37 to Gln71 are disordered. Residues Phe89–Lys275 form the DCUN1 domain.

In terms of assembly, may interact (via the DCUN1 domain) with unneddylated cullins.

Its subcellular location is the nucleus. Functionally, contributes to the neddylation of all cullins by transferring NEDD8 from N-terminally acetylated NEDD8-conjugating E2s enzyme to different cullin C-terminal domain-RBX complexes. The chain is DCN1-like protein 4 from Danio rerio (Zebrafish).